The primary structure comprises 267 residues: Tryptophan synthase alpha chain (267 aa).

Residues Glu-47 and Asp-58 each act as proton acceptor in the active site.

Belongs to the TrpA family. As to quaternary structure, tetramer of two alpha and two beta chains.

It catalyses the reaction (1S,2R)-1-C-(indol-3-yl)glycerol 3-phosphate + L-serine = D-glyceraldehyde 3-phosphate + L-tryptophan + H2O. Its pathway is amino-acid biosynthesis; L-tryptophan biosynthesis; L-tryptophan from chorismate: step 5/5. The alpha subunit is responsible for the aldol cleavage of indoleglycerol phosphate to indole and glyceraldehyde 3-phosphate. This Chlorobium chlorochromatii (strain CaD3) protein is Tryptophan synthase alpha chain.